The primary structure comprises 457 residues: MAEVRGVQRVLFGDWLLGEVSSGQYEGLQWLNEARTVFRVPWKHFGRRDLDEEDAQIFKAWAVARGRWPPSGVNLPPPEAEAAERRERRGWKTNFRCALHSTGRFILRQDNSGDPVDPHKVYELSRELGSTVGPATENREEVSLSNALPTQGVSPGSFLARENAGLQTPSPLLSSDAGDLLLQVLQYSHILESESGADPVPPQAPGQEQDRVYEEPYAAWQVEAVPSPRPQQPALTERSLGFLDVTIMYKGRTVLQAVVGHPRCVFLYSPMAPAVRTSEPQPVIFPSPAELPDQKQLHYTETLLQHVSPGLQLELRGPSLWALRMGKCKVYWEVGSPMGTTGPSTPPQLLERNRHTPIFDFSTFFRELEEFRARRRQGSPHYTIYLGFGQDLSAGRPKEKTLILVKLEPWVCKAYLEGVQREGVSSLDSSSLGLCLSSTNSLYEDIEHFLMDLGQWP.

Positions Arg-9–Arg-126 form a DNA-binding region, IRF tryptophan pentad repeat. Lys-92 is subject to N6-acetyllysine; by KAT2A and KAT2B. The tract at residues Arg-238–Trp-410 is necessary for the interaction with NMI. Lys-329 participates in a covalent cross-link: Glycyl lysine isopeptide (Lys-Gly) (interchain with G-Cter in ubiquitin). Glycyl lysine isopeptide (Lys-Gly) (interchain with G-Cter in SUMO) cross-links involve residues Lys-398 and Lys-400. 3 positions are modified to phosphoserine: Ser-425, Ser-426, and Ser-429. Residue Ser-431 is modified to Phosphoserine; by TBK1 and IKKE. 3 positions are modified to phosphoserine: Ser-437, Ser-438, and Ser-441.

The protein belongs to the IRF family. In terms of assembly, monomer. Homodimer; phosphorylation-induced. Heterodimer with IRF3. Interacts with TICAM1 and TICAM2. Interacts with MYD88 and TRAF6. Interacts with NMI; the interaction is direct and leads to the inhibition of IRF7-mediated type I IFN production. Interacts with GBP4; preventing interaction between TRAF6 and IRF7, resulting in impaired TRAF6-mediated IRF7 ubiquitination. Interacts with TARBP2; this interaction prevents IRF7 phosphorylation and activation. Acetylation inhibits its DNA-binding ability and activity. In terms of processing, in response to a viral infection, phosphorylated by TBK1 and IKBKE1. Phosphorylation, and subsequent activation is inhibited by vaccinia virus protein E3. In TLR7- and TLR9-mediated signaling pathway, phosphorylated by IRAK1. Post-translationally, TRAF6-mediated ubiquitination is required for IRF7 activation. TRIM35 mediates IRF7 'Lys-48'-linked polyubiquitination and subsequent proteasomal degradation. 'Lys-48'-linked polyubiquitination and subsequent proteasomal degradation is NMI-dependent in response to Sendai virus infection. Ubiquitinated by UBE3C, leading to its degradation. Sumoylated by TRIM28, which inhibits its transactivation activity. In terms of processing, 'Lys-63'-linked ubiquitination by NEURL3 promotes IRF7 activation.

Its subcellular location is the nucleus. It is found in the cytoplasm. With respect to regulation, in the absence of viral infection, maintained as a monomer in an autoinhibited state and phosphorylation disrupts this autoinhibition leading to the liberation of the DNA-binding and dimerization activities and its nuclear localization where it can activate type I IFN and ISG genes. In terms of biological role, key transcriptional regulator of type I interferon (IFN)-dependent immune responses and plays a critical role in the innate immune response against DNA and RNA viruses. Regulates the transcription of type I IFN genes (IFN-alpha and IFN-beta) and IFN-stimulated genes (ISG) by binding to an interferon-stimulated response element (ISRE) in their promoters. Can efficiently activate both the IFN-beta (IFNB) and the IFN-alpha (IFNA) genes and mediate their induction via both the virus-activated, MyD88-independent pathway and the TLR-activated, MyD88-dependent pathway. Induces transcription of ubiquitin hydrolase USP25 mRNA in response to lipopolysaccharide (LPS) or viral infection in a type I IFN-dependent manner. Required during both the early and late phases of the IFN gene induction but is more critical for the late than for the early phase. Exists in an inactive form in the cytoplasm of uninfected cells and following viral infection, double-stranded RNA (dsRNA), or toll-like receptor (TLR) signaling, becomes phosphorylated by IKBKE and TBK1 kinases. This induces a conformational change, leading to its dimerization and nuclear localization where along with other coactivators it can activate transcription of the type I IFN and ISG genes. Can also play a role in regulating adaptive immune responses by inducing PSMB9/LMP2 expression, either directly or through induction of IRF1. Binds to the Q promoter (Qp) of EBV nuclear antigen 1 a (EBNA1) and may play a role in the regulation of EBV latency. Can activate distinct gene expression programs in macrophages and regulate the anti-tumor properties of primary macrophages. This chain is Interferon regulatory factor 7 (Irf7), found in Mus musculus (Mouse).